Reading from the N-terminus, the 181-residue chain is Large ribosomal subunit protein eL18 (181 aa).

A disordered region spans residues 152 to 181 (WGKAPGQRGSHSAPYVRSEGRKFERAHGLK). Over residues 169–181 (SEGRKFERAHGLK) the composition is skewed to basic and acidic residues.

Belongs to the eukaryotic ribosomal protein eL18 family.

It is found in the cytoplasm. In Tetrahymena thermophila, this protein is Large ribosomal subunit protein eL18 (RPL18).